The following is a 155-amino-acid chain: Ribosomal RNA large subunit methyltransferase H (155 aa).

S-adenosyl-L-methionine is bound by residues L73, G104, and 123-128 (LSPLTL).

Belongs to the RNA methyltransferase RlmH family. Homodimer.

It localises to the cytoplasm. The catalysed reaction is pseudouridine(1915) in 23S rRNA + S-adenosyl-L-methionine = N(3)-methylpseudouridine(1915) in 23S rRNA + S-adenosyl-L-homocysteine + H(+). Specifically methylates the pseudouridine at position 1915 (m3Psi1915) in 23S rRNA. The polypeptide is Ribosomal RNA large subunit methyltransferase H (Pseudomonas syringae pv. tomato (strain ATCC BAA-871 / DC3000)).